We begin with the raw amino-acid sequence, 283 residues long: ATP phosphoribosyltransferase (283 aa).

This sequence belongs to the ATP phosphoribosyltransferase family. Long subfamily. It depends on Mg(2+) as a cofactor.

It is found in the cytoplasm. It catalyses the reaction 1-(5-phospho-beta-D-ribosyl)-ATP + diphosphate = 5-phospho-alpha-D-ribose 1-diphosphate + ATP. It functions in the pathway amino-acid biosynthesis; L-histidine biosynthesis; L-histidine from 5-phospho-alpha-D-ribose 1-diphosphate: step 1/9. Feedback inhibited by histidine. In terms of biological role, catalyzes the condensation of ATP and 5-phosphoribose 1-diphosphate to form N'-(5'-phosphoribosyl)-ATP (PR-ATP). Has a crucial role in the pathway because the rate of histidine biosynthesis seems to be controlled primarily by regulation of HisG enzymatic activity. In Rhodococcus opacus (strain B4), this protein is ATP phosphoribosyltransferase.